We begin with the raw amino-acid sequence, 572 residues long: MAKELKGIAASDGIAIAKAYLLVEPDLSYEKTEVTDVESEVKRFESALEVSRTELSTIREKAAKDLGEDKAQIFDAHLLVLNDPELTGPIEESIKNAKTNAETALQETTDMFIGMFESMDNEYMRERAADIKDVRKRVLSHLLGVTIPNPALIDEEVVVVAADLTPSDTAQLNRKFVKGFVTDIGGRTSHSAIMARSLEIPAVVGTKEVTASVAKNDIVIIDGLEGNVIIHPTEEQIAHYEKIKSDFALQQAEWEKLKNEKTVSKDGVHVELAANIGTPNDLEGVISNGGEAVGLYRTEFLYMGRDNFPTEEEQFEAYKAVVSGMDGKSVVVRTLDIGGDKTLPYLELPEEMNPFLGFRAIRLCFANEELFRTQLRALLRASVYGNLKIMFPMIATVNEFRQARDILLDEKAKLKAAGTEVSDSIELGIMIEIPAAAVLADQFAKEVDFFSIGTNDLIQYTMAADRMNERVSYLYQPYNPSILRLVKMVIDASHKEGKWTGMCGEMAGDQTAVPLLLGLGLDEFSMSASSILKSRSLIKRLDQSEMVKLAEEALNKSTAEEVVELVEKYTAE.

Catalysis depends on His190, which acts as the Tele-phosphohistidine intermediate. Residues Arg297 and Arg333 each coordinate phosphoenolpyruvate. Mg(2+)-binding residues include Glu432 and Asp456. Residues 455-456 (ND) and Arg466 contribute to the phosphoenolpyruvate site. The active-site Proton donor is Cys503.

Belongs to the PEP-utilizing enzyme family. As to quaternary structure, homodimer. Mg(2+) is required as a cofactor.

It localises to the cytoplasm. It carries out the reaction L-histidyl-[protein] + phosphoenolpyruvate = N(pros)-phospho-L-histidyl-[protein] + pyruvate. General (non sugar-specific) component of the phosphoenolpyruvate-dependent sugar phosphotransferase system (sugar PTS). This major carbohydrate active-transport system catalyzes the phosphorylation of incoming sugar substrates concomitantly with their translocation across the cell membrane. Enzyme I transfers the phosphoryl group from phosphoenolpyruvate (PEP) to the phosphoryl carrier protein (HPr). This Listeria innocua serovar 6a (strain ATCC BAA-680 / CLIP 11262) protein is Phosphoenolpyruvate-protein phosphotransferase (ptsI).